We begin with the raw amino-acid sequence, 568 residues long: Urease subunit alpha (568 aa).

The Urease domain maps to 130–568 (GGIDTHIHFI…LPMAQRYFLF (439 aa)). Residues His-135, His-137, and Lys-218 each contribute to the Ni(2+) site. The residue at position 218 (Lys-218) is an N6-carboxylysine. Substrate is bound at residue His-220. Residues His-247 and His-273 each contribute to the Ni(2+) site. His-321 serves as the catalytic Proton donor. Residue Asp-361 participates in Ni(2+) binding.

The protein belongs to the metallo-dependent hydrolases superfamily. Urease alpha subunit family. Heterotrimer of UreA (gamma), UreB (beta) and UreC (alpha) subunits. Three heterotrimers associate to form the active enzyme. It depends on Ni cation as a cofactor. Post-translationally, carboxylation allows a single lysine to coordinate two nickel ions.

It is found in the cytoplasm. It catalyses the reaction urea + 2 H2O + H(+) = hydrogencarbonate + 2 NH4(+). Its pathway is nitrogen metabolism; urea degradation; CO(2) and NH(3) from urea (urease route): step 1/1. The polypeptide is Urease subunit alpha (Burkholderia pseudomallei (strain 1106a)).